The following is a 126-amino-acid chain: MFPGGGKFNPRMMKQMQKMMKDFGMDAEDLKAVKVTIELEDQLLVFEKPKVQVMDMLGNKTYSITGKAKKVAKEEEKIEDVEVKVEVTEEDIEMVSSQCGVSKEEAKKALEEANGDLAEAILKLGN.

The region spanning 10-77 (PRMMKQMQKM…AKKVAKEEEK (68 aa)) is the NAC-A/B domain.

The protein belongs to the NAC-alpha family. As to quaternary structure, homodimer. Interacts with the ribosome. Binds ribosomal RNA.

Functionally, contacts the emerging nascent chain on the ribosome. The chain is Nascent polypeptide-associated complex protein from Methanococcus maripaludis (strain C7 / ATCC BAA-1331).